The chain runs to 50 residues: HLRNHFGSKPFKCGKCNYSCANKSMLNSHMKSHSNIYQYRCANCCYATKY.

C2H2-type zinc fingers lie at residues 1-5, 11-33, and 39-50; these read HLRNH, FKCG…MKSH, and YRCANCCYATKY.

It belongs to the hunchback C2H2-type zinc-finger protein family.

It localises to the nucleus. In terms of biological role, gap class segmentation protein that controls development of head structures. In Pholcus phalangioides (Longbodied cellar spider), this protein is Protein hunchback (hb).